Reading from the N-terminus, the 279-residue chain is ATP synthase gamma chain (279 aa).

The protein belongs to the ATPase gamma chain family. As to quaternary structure, F-type ATPases have 2 components, CF(1) - the catalytic core - and CF(0) - the membrane proton channel. CF(1) has five subunits: alpha(3), beta(3), gamma(1), delta(1), epsilon(1). CF(0) has three main subunits: a, b and c.

The protein resides in the cell membrane. Its function is as follows. Produces ATP from ADP in the presence of a proton gradient across the membrane. The gamma chain is believed to be important in regulating ATPase activity and the flow of protons through the CF(0) complex. This chain is ATP synthase gamma chain, found in Mycoplasmopsis pulmonis (strain UAB CTIP) (Mycoplasma pulmonis).